Reading from the N-terminus, the 20-residue chain is Brevinin-1T (20 aa).

A disulfide bridge connects residues Cys-14 and Cys-20.

The protein belongs to the frog skin active peptide (FSAP) family. Brevinin subfamily. In terms of tissue distribution, expressed by the skin glands.

It localises to the secreted. Functionally, antibacterial activity against representative Gram-negative and Gram-positive bacteria and exhibits a very high hemolytic activity. The sequence is that of Brevinin-1T from Rana temporaria (European common frog).